Here is a 458-residue protein sequence, read N- to C-terminus: Biphenyl dioxygenase subunit alpha (458 aa).

Residues 58 to 156 (WLLLGHESHV…KEGDCGFDKA (99 aa)) enclose the Rieske domain. [2Fe-2S] cluster-binding residues include C100, H102, C120, and H123. Fe cation contacts are provided by H233 and H239.

This sequence belongs to the bacterial ring-hydroxylating dioxygenase alpha subunit family. In terms of assembly, heterohexamer consisting of three BphA subunits and three BphE subunits. A ferredoxin (BphF) and a ferredoxin reductase (BphG) must be present to obtain activity. It depends on [2Fe-2S] cluster as a cofactor. The cofactor is Fe cation.

It carries out the reaction biphenyl + NADH + O2 + H(+) = (2R,3S)-3-phenylcyclohexa-3,5-diene-1,2-diol + NAD(+). It participates in xenobiotic degradation; biphenyl degradation; 2-hydroxy-2,4-pentadienoate and benzoate from biphenyl: step 1/4. This chain is Biphenyl dioxygenase subunit alpha (bphA), found in Metapseudomonas furukawaii (Pseudomonas furukawaii).